Here is a 477-residue protein sequence, read N- to C-terminus: Glycogen synthase (477 aa).

Lys-16 is a binding site for ADP-alpha-D-glucose.

This sequence belongs to the glycosyltransferase 1 family. Bacterial/plant glycogen synthase subfamily.

The catalysed reaction is [(1-&gt;4)-alpha-D-glucosyl](n) + ADP-alpha-D-glucose = [(1-&gt;4)-alpha-D-glucosyl](n+1) + ADP + H(+). It participates in glycan biosynthesis; glycogen biosynthesis. In terms of biological role, synthesizes alpha-1,4-glucan chains using ADP-glucose. This is Glycogen synthase from Oceanobacillus iheyensis (strain DSM 14371 / CIP 107618 / JCM 11309 / KCTC 3954 / HTE831).